The following is an 80-amino-acid chain: MKKPLRQQNRQIISYIPRTEPAPPEHAIKMDSFRDVWMLRGKYVAFVLMGESFMRSPAFTVPESAQRWANQIRQEGEVTE.

This sequence belongs to the CedA family.

Functionally, activates the cell division inhibited by chromosomal DNA over-replication. This chain is Cell division activator CedA, found in Escherichia coli (strain SMS-3-5 / SECEC).